Consider the following 571-residue polypeptide: Kinesin light chain (571 aa).

A coiled-coil region spans residues 54–160; the sequence is LLTSMKTIRK…KKHLEFMNEM (107 aa). The span at 167–177 shows a compositional bias: basic and acidic residues; sequence EAQVNEEKESE. The tract at residues 167 to 210 is disordered; the sequence is EAQVNEEKESEQSSLDLGFPDDDDDGGQPEVLSPTQPSAMAQAA. TPR repeat units lie at residues 220–253, 262–295, 304–337, 346–379, 388–421, and 471–504; these read LRTL…LEKT, ATML…REKT, AATL…REKV, AKQL…YQKE, AKTK…AHEK, and TTTL…RKSA. The segment at 518-571 is disordered; sequence GSDFSKGQSPKDRKRSNSRDRNRRDSMDSVSYEKSGDGDEHEKSKLHVGTSHKQ. Basic and acidic residues-rich tracts occupy residues 526–544 and 551–562; these read SPKD…RDSM and KSGDGDEHEKSK.

It belongs to the kinesin light chain family. In terms of assembly, oligomeric complex composed of two heavy chains and two light chains.

Its subcellular location is the cytoplasm. The protein localises to the cytoskeleton. Kinesin is a microtubule-associated force-producing protein that may play a role in organelle transport. The light chain may function in coupling of cargo to the heavy chain or in the modulation of its ATPase activity. The chain is Kinesin light chain from Doryteuthis pealeii (Longfin inshore squid).